Reading from the N-terminus, the 715-residue chain is Fatty acid oxidation complex subunit alpha (715 aa).

Residues 1 to 190 (MTTTSAFMLN…KAGLVDDVVP (190 aa)) form an enoyl-CoA hydratase region. The segment at 306–715 (GPLNSVGILG…WTNGETDQGN (410 aa)) is 3-hydroxyacyl-CoA dehydrogenase.

It in the N-terminal section; belongs to the enoyl-CoA hydratase/isomerase family. This sequence in the central section; belongs to the 3-hydroxyacyl-CoA dehydrogenase family. Heterotetramer of two alpha chains (FadJ) and two beta chains (FadI).

It localises to the cytoplasm. The enzyme catalyses a (3S)-3-hydroxyacyl-CoA = a (2E)-enoyl-CoA + H2O. It catalyses the reaction a 4-saturated-(3S)-3-hydroxyacyl-CoA = a (3E)-enoyl-CoA + H2O. The catalysed reaction is a (3S)-3-hydroxyacyl-CoA + NAD(+) = a 3-oxoacyl-CoA + NADH + H(+). It carries out the reaction (3S)-3-hydroxybutanoyl-CoA = (3R)-3-hydroxybutanoyl-CoA. Its pathway is lipid metabolism; fatty acid beta-oxidation. In terms of biological role, catalyzes the formation of a hydroxyacyl-CoA by addition of water on enoyl-CoA. Also exhibits 3-hydroxyacyl-CoA epimerase and 3-hydroxyacyl-CoA dehydrogenase activities. This chain is Fatty acid oxidation complex subunit alpha, found in Salmonella enteritidis PT4 (strain P125109).